Reading from the N-terminus, the 364-residue chain is Zinc finger protein CONSTANS-LIKE 12 (364 aa).

Residues Cys-5, Cys-8, Cys-28, and His-33 each coordinate Zn(2+). The segment at 5-47 (CDHCATSQALIYCKSDLAKLCLNCDVHVHSANPLSHRHIRSLI) adopts a B box-type 1; atypical zinc-finger fold. The B box-type 2; degenerate zinc finger occupies 48 to 88 (CEKCFSQPAAIRCLDEKVSYCQGCHWHESNCSELGHRVQSL). Residues 280 to 322 (QDCGMSPGFIMSEAPWETNFEVSCPQARNEAKLRYKEKKLKRS) form the CCT domain.

The protein belongs to the CONSTANS family.

It localises to the nucleus. The chain is Zinc finger protein CONSTANS-LIKE 12 (COL12) from Arabidopsis thaliana (Mouse-ear cress).